A 423-amino-acid polypeptide reads, in one-letter code: Probable sodium/metabolite cotransporter BASS3, chloroplastic (423 aa).

A chloroplast-targeting transit peptide spans 1–45 (MAAAVAASSSSSSSSCAAVGVATASHPHRHRQARFVVSPPAPASP). Transmembrane regions (helical) follow at residues 106–126 (ALLP…PATF), 138–158 (LGGI…ALAF), 165–187 (TIGY…RAFG), 192–214 (FFAG…ASFL), 231–251 (ISSV…VVPV), 254–274 (IAMA…GLLL), 287–307 (PVMP…PLAI), 318–338 (FLLL…GYWI), and 380–400 (VPAA…ASYW).

Belongs to the bile acid:sodium symporter (BASS) (TC 2.A.28) family.

The protein resides in the membrane. It is found in the plastid. Its subcellular location is the chloroplast envelope. Functionally, may function as sodium-coupled metabolite transporter across the chloroplast envelope. This chain is Probable sodium/metabolite cotransporter BASS3, chloroplastic (BASS3), found in Oryza sativa subsp. japonica (Rice).